Here is a 444-residue protein sequence, read N- to C-terminus: Ribosomal protein uS12 methylthiotransferase RimO (444 aa).

The MTTase N-terminal domain occupies 2-118; that stretch reads LKIALESLGC…IDKILKELSE (117 aa). Residues cysteine 11, cysteine 47, cysteine 81, cysteine 155, cysteine 159, and cysteine 162 each contribute to the [4Fe-4S] cluster site. One can recognise a Radical SAM core domain in the interval 141-371; sequence STPSYMAYLK…MMIQQKISEE (231 aa). Residues 374-441 enclose the TRAM domain; the sequence is DKKIGKTYEV…EYDLMGDVLY (68 aa).

It belongs to the methylthiotransferase family. RimO subfamily. The cofactor is [4Fe-4S] cluster.

It is found in the cytoplasm. It catalyses the reaction L-aspartate(89)-[ribosomal protein uS12]-hydrogen + (sulfur carrier)-SH + AH2 + 2 S-adenosyl-L-methionine = 3-methylsulfanyl-L-aspartate(89)-[ribosomal protein uS12]-hydrogen + (sulfur carrier)-H + 5'-deoxyadenosine + L-methionine + A + S-adenosyl-L-homocysteine + 2 H(+). Its function is as follows. Catalyzes the methylthiolation of an aspartic acid residue of ribosomal protein uS12. The protein is Ribosomal protein uS12 methylthiotransferase RimO of Clostridioides difficile (strain 630) (Peptoclostridium difficile).